The sequence spans 429 residues: Glutamate-1-semialdehyde 2,1-aminomutase (429 aa).

At lysine 265 the chain carries N6-(pyridoxal phosphate)lysine.

Belongs to the class-III pyridoxal-phosphate-dependent aminotransferase family. HemL subfamily. As to quaternary structure, homodimer. Pyridoxal 5'-phosphate serves as cofactor.

Its subcellular location is the cytoplasm. The catalysed reaction is (S)-4-amino-5-oxopentanoate = 5-aminolevulinate. The protein operates within porphyrin-containing compound metabolism; protoporphyrin-IX biosynthesis; 5-aminolevulinate from L-glutamyl-tRNA(Glu): step 2/2. This Legionella pneumophila (strain Corby) protein is Glutamate-1-semialdehyde 2,1-aminomutase.